The chain runs to 243 residues: MWFLFLLLPLWAGCAEPGDSEWVHLPSKCEVCKYVALELKSSFDETSRTRELIDTRYGFLEDDKKKKKIKYTTSDIRLIEVTEGLCSRLLEYNLHKERTGSNRFAKGMSETFQTLHHLVHKGVKVVMDIPYELWNETSAEVADMKKQCDVMMENYEEVIEDWYRNHQDEDLSEFLCARHVLKGQDQSCLSEQGDSRKGDTGPSTGTKKQKKQGEKKNKSKKQNSGSKEEKKQMDQPMAAKEEL.

A signal peptide spans 1-15 (MWFLFLLLPLWAGCA). The Saposin B-type domain occupies 27–236 (SKCEVCKYVA…KEEKKQMDQP (210 aa)). Intrachain disulfides connect Cys-29–Cys-188, Cys-32–Cys-176, and Cys-86–Cys-148. Residues 136–160 (ETSAEVADMKKQCDVMMENYEEVIE) are a coiled coil. Residues 186-243 (QSCLSEQGDSRKGDTGPSTGTKKQKKQGEKKNKSKKQNSGSKEEKKQMDQPMAAKEEL) form a disordered region. Positions 226 to 243 (SKEEKKQMDQPMAAKEEL) are enriched in basic and acidic residues.

The protein belongs to the canopy family.

It is found in the endoplasmic reticulum. Toll-like receptor (TLR)-specific co-chaperone for HSP90B1. Required for proper TLR folding and hence controls TLR exit from the endoplasmic reticulum. Consequently, required for immune responses. The sequence is that of Protein canopy homolog 3 (cnpy3) from Xenopus laevis (African clawed frog).